We begin with the raw amino-acid sequence, 208 residues long: Putative dioxygenase RT0384 (208 aa).

Belongs to the intradiol ring-cleavage dioxygenase family.

The sequence is that of Putative dioxygenase RT0384 from Rickettsia typhi (strain ATCC VR-144 / Wilmington).